We begin with the raw amino-acid sequence, 977 residues long: Synaptopodin 2-like protein (977 aa).

Residues 6-88 (EVLVTLSGGA…QLVLTVQRLA (83 aa)) enclose the PDZ domain. Disordered stretches follow at residues 91-226 (GPVQ…GPLR), 317-352 (AGTG…QSDW), and 364-677 (AGSR…EDAL). A phosphoserine mark is found at S108 and S111. Over residues 109–123 (PLSPEPPGAPVPQPL) the composition is skewed to pro residues. A Phosphothreonine modification is found at T141. Phosphoserine occurs at positions 143, 178, and 180. A compositionally biased stretch (pro residues) spans 183–192 (EPAPTIPGPP). The segment covering 194-203 (QGDSRVSSPS) has biased composition (polar residues). Over residues 216 to 226 (EALLLPHGPLR) the composition is skewed to low complexity. Phosphoserine occurs at positions 345, 350, 374, 381, and 384. At R386 the chain carries Omega-N-methylarginine. A compositionally biased stretch (pro residues) spans 436–450 (PPSPLPAPVASPRPF). Omega-N-methylarginine occurs at positions 466, 469, and 479. Residues 510–525 (LSSQGPTPLPSFTSGV) show a composition bias toward polar residues. Composition is skewed to low complexity over residues 530-545 (PVSG…GPVT) and 572-595 (SAAA…ARPE). Pro residues predominate over residues 596–607 (APAPGPGAPEPP). Phosphoserine is present on residues S670 and S678. The tract at residues 697–802 (TLPHVTPKTP…PSLPPSWKYS (106 aa)) is disordered. Positions 704-730 (KTPPPMAPKTPPPMTPKTPPPVAPKPP) are enriched in pro residues. Phosphothreonine is present on residues T705 and T713. Omega-N-methylarginine is present on R757. Over residues 781 to 796 (GLGPRPRSPSPTPSLP) the composition is skewed to pro residues. Residues S788 and S790 each carry the phosphoserine modification. T792 carries the phosphothreonine modification. Residues R806, R826, and R889 each carry the omega-N-methylarginine modification. S891 is modified (phosphoserine). Phosphothreonine occurs at positions 892 and 898. R910 carries the post-translational modification Omega-N-methylarginine. The residue at position 921 (R921) is an Asymmetric dimethylarginine; alternate. Residue R921 is modified to Omega-N-methylarginine; alternate. Residues 922–950 (TELASAPVPSPAPPPEAPRGLGASPSSCG) form a disordered region. A compositionally biased stretch (pro residues) spans 929-938 (VPSPAPPPEA). R955 and R957 each carry omega-N-methylarginine.

It belongs to the synaptopodin family.

It is found in the cytoplasm. The protein resides in the cytoskeleton. Its function is as follows. Actin-associated protein that may play a role in modulating actin-based shape. This is Synaptopodin 2-like protein (SYNPO2L) from Homo sapiens (Human).